The primary structure comprises 223 residues: Thiopurine S-methyltransferase (223 aa).

S-adenosyl-L-methionine is bound by residues W10, L45, E66, and R127.

Belongs to the class I-like SAM-binding methyltransferase superfamily. TPMT family.

It localises to the cytoplasm. It catalyses the reaction S-adenosyl-L-methionine + a thiopurine = S-adenosyl-L-homocysteine + a thiopurine S-methylether.. This chain is Thiopurine S-methyltransferase, found in Shewanella woodyi (strain ATCC 51908 / MS32).